The sequence spans 664 residues: Putative membrane protein Bcell_0381 (664 aa).

The segment covering 588–616 (DVTQDENGEEKSEEDNKEEIVEENTEEDN) has biased composition (acidic residues). Residues 588-622 (DVTQDENGEEKSEEDNKEEIVEENTEEDNKEEKTI) are disordered. A helical transmembrane segment spans residues 636–656 (YQFLLAGIIMLVGGSCIYVFY).

The protein localises to the cell membrane. This chain is Putative membrane protein Bcell_0381, found in Evansella cellulosilytica (strain ATCC 21833 / DSM 2522 / FERM P-1141 / JCM 9156 / N-4) (Bacillus cellulosilyticus).